The following is a 200-amino-acid chain: ATP-dependent Clp protease proteolytic subunit 2 (200 aa).

Catalysis depends on Ser101, which acts as the Nucleophile. His126 is an active-site residue.

It belongs to the peptidase S14 family. In terms of assembly, fourteen ClpP subunits assemble into 2 heptameric rings which stack back to back to give a disk-like structure with a central cavity, resembling the structure of eukaryotic proteasomes.

Its subcellular location is the cytoplasm. The catalysed reaction is Hydrolysis of proteins to small peptides in the presence of ATP and magnesium. alpha-casein is the usual test substrate. In the absence of ATP, only oligopeptides shorter than five residues are hydrolyzed (such as succinyl-Leu-Tyr-|-NHMec, and Leu-Tyr-Leu-|-Tyr-Trp, in which cleavage of the -Tyr-|-Leu- and -Tyr-|-Trp bonds also occurs).. Cleaves peptides in various proteins in a process that requires ATP hydrolysis. Has a chymotrypsin-like activity. Plays a major role in the degradation of misfolded proteins. This chain is ATP-dependent Clp protease proteolytic subunit 2, found in Prochlorococcus marinus (strain MIT 9313).